We begin with the raw amino-acid sequence, 497 residues long: Probable cytosol aminopeptidase (497 aa).

Mn(2+)-binding residues include Lys-264 and Asp-269. Residue Lys-276 is part of the active site. 3 residues coordinate Mn(2+): Asp-287, Asp-347, and Glu-349. Arg-351 is an active-site residue.

It belongs to the peptidase M17 family. Mn(2+) serves as cofactor.

The protein resides in the cytoplasm. It catalyses the reaction Release of an N-terminal amino acid, Xaa-|-Yaa-, in which Xaa is preferably Leu, but may be other amino acids including Pro although not Arg or Lys, and Yaa may be Pro. Amino acid amides and methyl esters are also readily hydrolyzed, but rates on arylamides are exceedingly low.. The catalysed reaction is Release of an N-terminal amino acid, preferentially leucine, but not glutamic or aspartic acids.. Functionally, presumably involved in the processing and regular turnover of intracellular proteins. Catalyzes the removal of unsubstituted N-terminal amino acids from various peptides. The sequence is that of Probable cytosol aminopeptidase from Thermosynechococcus vestitus (strain NIES-2133 / IAM M-273 / BP-1).